Here is a 101-residue protein sequence, read N- to C-terminus: Chaperone modulatory protein CbpM (101 aa).

The protein belongs to the CbpM family.

Functionally, interacts with CbpA and inhibits both the DnaJ-like co-chaperone activity and the DNA binding activity of CbpA. Together with CbpA, modulates the activity of the DnaK chaperone system. Does not inhibit the co-chaperone activity of DnaJ. This chain is Chaperone modulatory protein CbpM, found in Pseudomonas putida (strain GB-1).